A 266-amino-acid polypeptide reads, in one-letter code: 3-methyl-2-oxobutanoate hydroxymethyltransferase (266 aa).

Residues Asp-45 and Asp-84 each coordinate Mg(2+). 3-methyl-2-oxobutanoate is bound by residues 45-46 (DS), Asp-84, and Lys-112. Glu-114 contributes to the Mg(2+) binding site. The active-site Proton acceptor is the Glu-181.

This sequence belongs to the PanB family. Homodecamer; pentamer of dimers. Mg(2+) serves as cofactor.

Its subcellular location is the cytoplasm. The catalysed reaction is 3-methyl-2-oxobutanoate + (6R)-5,10-methylene-5,6,7,8-tetrahydrofolate + H2O = 2-dehydropantoate + (6S)-5,6,7,8-tetrahydrofolate. Its pathway is cofactor biosynthesis; (R)-pantothenate biosynthesis; (R)-pantoate from 3-methyl-2-oxobutanoate: step 1/2. Functionally, catalyzes the reversible reaction in which hydroxymethyl group from 5,10-methylenetetrahydrofolate is transferred onto alpha-ketoisovalerate to form ketopantoate. The sequence is that of 3-methyl-2-oxobutanoate hydroxymethyltransferase from Pseudomonas savastanoi pv. phaseolicola (strain 1448A / Race 6) (Pseudomonas syringae pv. phaseolicola (strain 1448A / Race 6)).